We begin with the raw amino-acid sequence, 227 residues long: Cytochrome c oxidase subunit 2 (227 aa).

Over 1–14 (MAHPLQLGLQDASS) the chain is Mitochondrial intermembrane. Residues 15 to 45 (PIMEELLYFHDHALMIVFLISSLVLYTISLM) traverse the membrane as a helical segment. At 46 to 59 (LTTKLMHTSTMNAQ) the chain is on the mitochondrial matrix side. A helical membrane pass occupies residues 60-87 (MVETMWTILPAVILTSIALPSLRILYMT). Over 88 to 227 (DEINNPLLTI…HFETWSTLTS (140 aa)) the chain is Mitochondrial intermembrane. Residues histidine 161, cysteine 196, glutamate 198, cysteine 200, histidine 204, and methionine 207 each coordinate Cu cation. Glutamate 198 serves as a coordination point for Mg(2+).

This sequence belongs to the cytochrome c oxidase subunit 2 family. As to quaternary structure, component of the cytochrome c oxidase (complex IV, CIV), a multisubunit enzyme composed of 14 subunits. The complex is composed of a catalytic core of 3 subunits MT-CO1, MT-CO2 and MT-CO3, encoded in the mitochondrial DNA, and 11 supernumerary subunits COX4I, COX5A, COX5B, COX6A, COX6B, COX6C, COX7A, COX7B, COX7C, COX8 and NDUFA4, which are encoded in the nuclear genome. The complex exists as a monomer or a dimer and forms supercomplexes (SCs) in the inner mitochondrial membrane with NADH-ubiquinone oxidoreductase (complex I, CI) and ubiquinol-cytochrome c oxidoreductase (cytochrome b-c1 complex, complex III, CIII), resulting in different assemblies (supercomplex SCI(1)III(2)IV(1) and megacomplex MCI(2)III(2)IV(2)). Found in a complex with TMEM177, COA6, COX18, COX20, SCO1 and SCO2. Interacts with TMEM177 in a COX20-dependent manner. Interacts with COX20. Interacts with COX16. Cu cation is required as a cofactor.

The protein localises to the mitochondrion inner membrane. It catalyses the reaction 4 Fe(II)-[cytochrome c] + O2 + 8 H(+)(in) = 4 Fe(III)-[cytochrome c] + 2 H2O + 4 H(+)(out). Its function is as follows. Component of the cytochrome c oxidase, the last enzyme in the mitochondrial electron transport chain which drives oxidative phosphorylation. The respiratory chain contains 3 multisubunit complexes succinate dehydrogenase (complex II, CII), ubiquinol-cytochrome c oxidoreductase (cytochrome b-c1 complex, complex III, CIII) and cytochrome c oxidase (complex IV, CIV), that cooperate to transfer electrons derived from NADH and succinate to molecular oxygen, creating an electrochemical gradient over the inner membrane that drives transmembrane transport and the ATP synthase. Cytochrome c oxidase is the component of the respiratory chain that catalyzes the reduction of oxygen to water. Electrons originating from reduced cytochrome c in the intermembrane space (IMS) are transferred via the dinuclear copper A center (CU(A)) of subunit 2 and heme A of subunit 1 to the active site in subunit 1, a binuclear center (BNC) formed by heme A3 and copper B (CU(B)). The BNC reduces molecular oxygen to 2 water molecules using 4 electrons from cytochrome c in the IMS and 4 protons from the mitochondrial matrix. This chain is Cytochrome c oxidase subunit 2 (MT-CO2), found in Galeopterus variegatus (Malayan flying lemur).